Here is a 479-residue protein sequence, read N- to C-terminus: Sulfate adenylyltransferase subunit 1 (479 aa).

Residues 22–238 (KDMLRFLTCG…DSMDISKEPK (217 aa)) form the tr-type G domain. Residues 31-38 (GSVDDGKS) form a G1 region. 31–38 (GSVDDGKS) contacts GTP. The interval 89 to 93 (GITID) is G2. The tract at residues 110-113 (DTPG) is G3. GTP is bound by residues 110 to 114 (DTPGH) and 165 to 168 (NKMD). The segment at 165–168 (NKMD) is G4. The segment at 202–204 (SAL) is G5.

Belongs to the TRAFAC class translation factor GTPase superfamily. Classic translation factor GTPase family. CysN/NodQ subfamily. In terms of assembly, heterodimer composed of CysD, the smaller subunit, and CysN.

It carries out the reaction sulfate + ATP + H(+) = adenosine 5'-phosphosulfate + diphosphate. The protein operates within sulfur metabolism; hydrogen sulfide biosynthesis; sulfite from sulfate: step 1/3. Functionally, with CysD forms the ATP sulfurylase (ATPS) that catalyzes the adenylation of sulfate producing adenosine 5'-phosphosulfate (APS) and diphosphate, the first enzymatic step in sulfur assimilation pathway. APS synthesis involves the formation of a high-energy phosphoric-sulfuric acid anhydride bond driven by GTP hydrolysis by CysN coupled to ATP hydrolysis by CysD. The protein is Sulfate adenylyltransferase subunit 1 of Sulfurovum sp. (strain NBC37-1).